The sequence spans 360 residues: DNA replication and repair protein RecF (360 aa).

Residue Gly33–Thr40 coordinates ATP.

Belongs to the RecF family.

The protein resides in the cytoplasm. In terms of biological role, the RecF protein is involved in DNA metabolism; it is required for DNA replication and normal SOS inducibility. RecF binds preferentially to single-stranded, linear DNA. It also seems to bind ATP. This Rickettsia akari (strain Hartford) protein is DNA replication and repair protein RecF.